A 187-amino-acid chain; its full sequence is Adenylate kinase (187 aa).

10-15 (GSGKGT) is an ATP binding site. The NMP stretch occupies residues 30–59 (STGDLLRAEVAAGSPLGLKAKEVMARGDLV). AMP-binding positions include Thr31, Arg36, 57–59 (DLV), 85–88 (GYPR), and Gln92. Positions 126-136 (GRAKAEGREDD) are LID. Arg127 lines the ATP pocket. Residues Arg133 and Arg144 each contribute to the AMP site. Gly172 provides a ligand contact to ATP.

Belongs to the adenylate kinase family. Monomer.

The protein resides in the cytoplasm. The enzyme catalyses AMP + ATP = 2 ADP. Its pathway is purine metabolism; AMP biosynthesis via salvage pathway; AMP from ADP: step 1/1. Functionally, catalyzes the reversible transfer of the terminal phosphate group between ATP and AMP. Plays an important role in cellular energy homeostasis and in adenine nucleotide metabolism. The protein is Adenylate kinase of Xanthomonas axonopodis pv. citri (strain 306).